The chain runs to 642 residues: Threonine--tRNA ligase (642 aa).

In terms of domain architecture, TGS spans 1–61 (MPIITLPDGS…TADSELAIIT (61 aa)). The segment at 243–534 (DHRKIGKQLD…LIEEYAGKFP (292 aa)) is catalytic. The Zn(2+) site is built by Cys-334, His-385, and His-511.

This sequence belongs to the class-II aminoacyl-tRNA synthetase family. As to quaternary structure, homodimer. Zn(2+) serves as cofactor.

The protein resides in the cytoplasm. The catalysed reaction is tRNA(Thr) + L-threonine + ATP = L-threonyl-tRNA(Thr) + AMP + diphosphate + H(+). Functionally, catalyzes the attachment of threonine to tRNA(Thr) in a two-step reaction: L-threonine is first activated by ATP to form Thr-AMP and then transferred to the acceptor end of tRNA(Thr). Also edits incorrectly charged L-seryl-tRNA(Thr). This chain is Threonine--tRNA ligase, found in Shewanella frigidimarina (strain NCIMB 400).